A 149-amino-acid chain; its full sequence is MNVILLDKIANLGNLGDQVSVKAGYARNFLLPQGKAVVANAENVKVFEARRAELEAKLAADLAAAADRAEKIAALEAVVIASKAGDEGKLFGSVGTRDIADAVTAAGVELAKAEVRLPLGALRTTGDFEVEVQLHTEVKSVVKVTVVAE.

The protein belongs to the bacterial ribosomal protein bL9 family.

Functionally, binds to the 23S rRNA. This Shewanella amazonensis (strain ATCC BAA-1098 / SB2B) protein is Large ribosomal subunit protein bL9.